We begin with the raw amino-acid sequence, 154 residues long: Superoxide dismutase [Cu-Zn] (154 aa).

Residues His-47, His-49, and His-64 each contribute to the Cu cation site. Cys-58 and Cys-147 are joined by a disulfide. Residues His-64, His-72, His-81, and Asp-84 each coordinate Zn(2+). Residue His-121 participates in Cu cation binding. Positions 124-137 (TDDLGRGDSEESKK) are enriched in basic and acidic residues. Residues 124-144 (TDDLGRGDSEESKKTGNAGAR) form a disordered region. A substrate-binding site is contributed by Arg-144.

Belongs to the Cu-Zn superoxide dismutase family. In terms of assembly, homodimer. It depends on Cu cation as a cofactor. Zn(2+) is required as a cofactor.

It is found in the cytoplasm. The enzyme catalyses 2 superoxide + 2 H(+) = H2O2 + O2. Destroys radicals which are normally produced within the cells and which are toxic to biological systems. In Emericella nidulans (strain FGSC A4 / ATCC 38163 / CBS 112.46 / NRRL 194 / M139) (Aspergillus nidulans), this protein is Superoxide dismutase [Cu-Zn] (sodA).